The primary structure comprises 130 residues: Glycine cleavage system H protein (130 aa).

In terms of domain architecture, Lipoyl-binding spans 25-107; it reads IATIGITEFA…YGEGWFLKVR (83 aa). N6-lipoyllysine is present on K66.

This sequence belongs to the GcvH family. In terms of assembly, the glycine cleavage system is composed of four proteins: P, T, L and H. (R)-lipoate serves as cofactor.

Its function is as follows. The glycine cleavage system catalyzes the degradation of glycine. The H protein shuttles the methylamine group of glycine from the P protein to the T protein. This chain is Glycine cleavage system H protein, found in Trichormus variabilis (strain ATCC 29413 / PCC 7937) (Anabaena variabilis).